Here is a 638-residue protein sequence, read N- to C-terminus: Chaperone protein DnaK (638 aa).

Position 198 is a phosphothreonine; by autocatalysis (T198). Residues 599–638 are disordered; that stretch reads IYESQQAEGGAEGGPSGHHDDGIVDADYEEVKDDNTKKSA. Residues 621–630 show a composition bias toward acidic residues; sequence IVDADYEEVK.

This sequence belongs to the heat shock protein 70 family.

Functionally, acts as a chaperone. The protein is Chaperone protein DnaK of Allorhizobium ampelinum (strain ATCC BAA-846 / DSM 112012 / S4) (Agrobacterium vitis (strain S4)).